The following is a 543-amino-acid chain: Probable malate:quinone oxidoreductase (543 aa).

The protein belongs to the MQO family. Requires FAD as cofactor.

The enzyme catalyses (S)-malate + a quinone = a quinol + oxaloacetate. The protein operates within carbohydrate metabolism; tricarboxylic acid cycle; oxaloacetate from (S)-malate (quinone route): step 1/1. The polypeptide is Probable malate:quinone oxidoreductase (Acinetobacter baylyi (strain ATCC 33305 / BD413 / ADP1)).